Reading from the N-terminus, the 281-residue chain is Pantothenate synthetase (281 aa).

Met26–His33 contributes to the ATP binding site. His33 functions as the Proton donor in the catalytic mechanism. A (R)-pantoate-binding site is contributed by Gln57. Gln57 is a beta-alanine binding site. Position 143-146 (Gly143–Asp146) interacts with ATP. Gln149 serves as a coordination point for (R)-pantoate. ATP is bound by residues Val172 and Leu180–Arg183.

The protein belongs to the pantothenate synthetase family. In terms of assembly, homodimer.

It is found in the cytoplasm. The enzyme catalyses (R)-pantoate + beta-alanine + ATP = (R)-pantothenate + AMP + diphosphate + H(+). Its pathway is cofactor biosynthesis; (R)-pantothenate biosynthesis; (R)-pantothenate from (R)-pantoate and beta-alanine: step 1/1. Catalyzes the condensation of pantoate with beta-alanine in an ATP-dependent reaction via a pantoyl-adenylate intermediate. This chain is Pantothenate synthetase, found in Chloroflexus aurantiacus (strain ATCC 29366 / DSM 635 / J-10-fl).